The sequence spans 235 residues: Flagellar L-ring protein (235 aa).

Residues 1-18 (MNKIAGTLFLLAGLAMAG) form the signal peptide. Cys19 is lipidated: N-palmitoyl cysteine. Residue Cys19 is the site of S-diacylglycerol cysteine attachment.

The protein belongs to the FlgH family. As to quaternary structure, the basal body constitutes a major portion of the flagellar organelle and consists of four rings (L,P,S, and M) mounted on a central rod.

Its subcellular location is the cell outer membrane. It localises to the bacterial flagellum basal body. Functionally, assembles around the rod to form the L-ring and probably protects the motor/basal body from shearing forces during rotation. The protein is Flagellar L-ring protein of Chelativorans sp. (strain BNC1).